A 142-amino-acid chain; its full sequence is Large ribosomal subunit protein bL17 (142 aa).

The protein belongs to the bacterial ribosomal protein bL17 family. Part of the 50S ribosomal subunit. Contacts protein L32.

In Brucella abortus (strain S19), this protein is Large ribosomal subunit protein bL17.